The sequence spans 138 residues: Large ribosomal subunit protein bL17 (138 aa).

Belongs to the bacterial ribosomal protein bL17 family. As to quaternary structure, part of the 50S ribosomal subunit. Contacts protein L32.

The chain is Large ribosomal subunit protein bL17 from Bradyrhizobium diazoefficiens (strain JCM 10833 / BCRC 13528 / IAM 13628 / NBRC 14792 / USDA 110).